The chain runs to 290 residues: Glutamate 5-kinase (290 aa).

Lys-21 contacts ATP. Substrate contacts are provided by Ser-60, Asp-151, and Asn-163. 217 to 223 (TGGMFTK) is an ATP binding site.

This sequence belongs to the glutamate 5-kinase family.

It is found in the cytoplasm. The enzyme catalyses L-glutamate + ATP = L-glutamyl 5-phosphate + ADP. It participates in amino-acid biosynthesis; L-proline biosynthesis; L-glutamate 5-semialdehyde from L-glutamate: step 1/2. Catalyzes the transfer of a phosphate group to glutamate to form L-glutamate 5-phosphate. In Leptospira interrogans serogroup Icterohaemorrhagiae serovar copenhageni (strain Fiocruz L1-130), this protein is Glutamate 5-kinase.